The sequence spans 118 residues: Small ribosomal subunit protein uS13 (118 aa).

Residues R93–K118 form a disordered region.

This sequence belongs to the universal ribosomal protein uS13 family. Part of the 30S ribosomal subunit. Forms a loose heterodimer with protein S19. Forms two bridges to the 50S subunit in the 70S ribosome.

In terms of biological role, located at the top of the head of the 30S subunit, it contacts several helices of the 16S rRNA. In the 70S ribosome it contacts the 23S rRNA (bridge B1a) and protein L5 of the 50S subunit (bridge B1b), connecting the 2 subunits; these bridges are implicated in subunit movement. Contacts the tRNAs in the A and P-sites. In Pseudomonas syringae pv. tomato (strain ATCC BAA-871 / DC3000), this protein is Small ribosomal subunit protein uS13.